The following is a 438-amino-acid chain: Protein DAY-LENGTH-DEPENDENT DELAYED-GREENING 1, chloroplastic (438 aa).

The N-terminal 54 residues, 1–54, are a transit peptide targeting the chloroplast; the sequence is MSLMSSSMVLCHCLSFSSQNPDPESSSSSLLRYKPCDSISLWGKRRKKLWRFVP. Helical transmembrane passes span 216-236, 314-334, 359-379, and 398-418; these read FLAV…DYLL, AFAN…LLYA, AFLI…SGWE, and ITIF…LWLF.

It belongs to the CemA family.

It is found in the plastid. The protein resides in the chloroplast envelope. The protein localises to the chloroplast membrane. The catalysed reaction is K(+)(in) + H(+)(out) = K(+)(out) + H(+)(in). The enzyme catalyses Ca(2+)(in) + H(+)(out) = Ca(2+)(out) + H(+)(in). Promotes K(+)/H(+) antiport activity supporting K(+) efflux to control H(+) homeostasis in chloroplasts. Also able to ensure Ca(2+)/H(+) antiport activity in vitro. Essential for chloroplast pH regulation and optimization of non-photochemical quenching (NPQ), a regulatory mechanism that dissipates excess light energy; acts downstream of PSBS but independently from PGR5 and FLAP1. The protein is Protein DAY-LENGTH-DEPENDENT DELAYED-GREENING 1, chloroplastic of Arabidopsis thaliana (Mouse-ear cress).